Here is a 129-residue protein sequence, read N- to C-terminus: Transcriptional activator protein (129 aa).

Low complexity predominate over residues 1–12; the sequence is MRSSSPSQPPSI. The interval 1 to 23 is disordered; it reads MRSSSPSQPPSIKKAHRQAKKRA. Residues 13-23 show a composition bias toward basic residues; sequence KKAHRQAKKRA. The short motif at 13–28 is the Nuclear localization signal element; the sequence is KKAHRQAKKRAIRRRR. The segment at 33–50 is a zinc-finger region; it reads CGCSIYFHIDCAGHGFTH. A disordered region spans residues 73–117; sequence LFQDKPSRGHAIHQDQDIQRPNPVQPQPQESIGSPQSIPELPSLD. A compositionally biased stretch (polar residues) spans 99-109; it reads QPQESIGSPQS. Residues 115 to 129 form a transactivation region; that stretch reads SLDDIDDSFWVELFS.

It belongs to the geminiviridae transcriptional activator protein family. In terms of assembly, monomer. Homodimer. Homooligomer. Self-interaction correlates with nuclear localization and efficient activation of transcription. Monomers suppress local silencing by interacting with and inactivating host adenosine kinase 2 (ADK2) in the cytoplasm. Interacts with and inhibits host SNF1 kinase. Binds to ssDNA. Post-translationally, phosphorylated.

The protein localises to the host nucleus. The protein resides in the host cytoplasm. Functionally, strong activator of the late viral genes promoters. Enhances the expression of the capsid protein and nuclear shuttle protein. Acts as a suppressor of RNA-mediated gene silencing, also known as post-transcriptional gene silencing (PTGS), a mechanism of plant viral defense that limits the accumulation of viral RNAs. Suppresses the host RNA silencing by inhibiting adenosine kinase 2 (ADK2), a kinase involved in a general methylation pathway. Also suppresses the host basal defense by interacting with and inhibiting SNF1 kinase, a key regulator of cell metabolism implicated in innate antiviral defense. Determines pathogenicity. This is Transcriptional activator protein from Solanum tuberosum (Potato).